The sequence spans 91 residues: UPF0250 protein NMC1112 (91 aa).

It belongs to the UPF0250 family.

In Neisseria meningitidis serogroup C / serotype 2a (strain ATCC 700532 / DSM 15464 / FAM18), this protein is UPF0250 protein NMC1112.